The sequence spans 211 residues: Protein-L-isoaspartate O-methyltransferase (211 aa).

Residue Ser-60 is part of the active site.

It belongs to the methyltransferase superfamily. L-isoaspartyl/D-aspartyl protein methyltransferase family.

It is found in the cytoplasm. The enzyme catalyses [protein]-L-isoaspartate + S-adenosyl-L-methionine = [protein]-L-isoaspartate alpha-methyl ester + S-adenosyl-L-homocysteine. Its function is as follows. Catalyzes the methyl esterification of L-isoaspartyl residues in peptides and proteins that result from spontaneous decomposition of normal L-aspartyl and L-asparaginyl residues. It plays a role in the repair and/or degradation of damaged proteins. The chain is Protein-L-isoaspartate O-methyltransferase from Alteromonas mediterranea (strain DSM 17117 / CIP 110805 / LMG 28347 / Deep ecotype).